We begin with the raw amino-acid sequence, 199 residues long: Oleosin 21.2 kDa (199 aa).

Basic and acidic residues predominate over residues 1–14 (MADTHRVDRTDRHF). The tract at residues 1 to 31 (MADTHRVDRTDRHFQFQSPYEGGRGQGQYEG) is disordered. A2 carries the post-translational modification N-acetylalanine. The interval 2–56 (ADTHRVDRTDRHFQFQSPYEGGRGQGQYEGDRGYGGGGYKSMMPESGPSSTQVLS) is polar. Residues 22–31 (GGRGQGQYEG) are compositionally biased toward gly residues. 3 consecutive transmembrane segments (helical) span residues 51–71 (STQVLSLLIGVPVVGSLLALA), 72–92 (GLLLAGSVIGLMVALPLFLLF), and 96–116 (IVPAALTIGLAMTGFLASGMF). The segment at 57–128 (LLIGVPVVGS…TGLSSISWVM (72 aa)) is hydrophobic. Residues 159-199 (KGKEMGQHVQNKAQDVKQYDISKPHDTTTKGHETQGRTTAA) are disordered. Over residues 172–193 (QDVKQYDISKPHDTTTKGHETQ) the composition is skewed to basic and acidic residues.

This sequence belongs to the oleosin family.

The protein localises to the lipid droplet. Its subcellular location is the membrane. Functionally, may have a structural role to stabilize the lipid body during desiccation of the seed by preventing coalescence of the oil. Probably interacts with both lipid and phospholipid moieties of lipid bodies. May also provide recognition signals for specific lipase anchorage in lipolysis during seedling growth. The protein is Oleosin 21.2 kDa of Arabidopsis thaliana (Mouse-ear cress).